Consider the following 243-residue polypeptide: Vesicle-associated membrane protein-associated protein B (243 aa).

Residue A2 is modified to N-acetylalanine. Residues 2-218 lie on the Cytoplasmic side of the membrane; that stretch reads AKVEQVLSLE…AALAATGKEE (217 aa). The MSP domain occupies 7–124; that stretch reads VLSLEPQHEL…MDSKLRCVFE (118 aa). A Phosphoserine modification is found at S146. Residue K147 forms a Glycyl lysine isopeptide (Lys-Gly) (interchain with G-Cter in SUMO1) linkage. S156 and S159 each carry phosphoserine. The stretch at 161–196 forms a coiled coil; sequence LDDTEVKKVMEECRRLQGEVQRLREESRQLKEEDGL. Residue S206 is modified to Phosphoserine. A helical; Anchor for type IV membrane protein membrane pass occupies residues 219-239; the sequence is GLSARLLALVVLFFIVGVIIG.

The protein belongs to the VAMP-associated protein (VAP) (TC 9.B.17) family. Homodimer, and heterodimer with VAPA. Interacts with VAMP1 and VAMP2. Interacts (via MSP domain) with ZFYVE27. Interacts with RMDN3. Interacts with KIF5A in a ZFYVE27-dependent manner. Interacts (via MSP domain) with STARD3 (via phospho-FFAT motif). Interacts with STARD3NL (via FFAT motif). Interacts with CERT1. Interacts with PLEKHA3 and SACM1L to form a ternary complex. Interacts with VPS13A (via FFAT motif). Interacts with RB1CC1 (via phosphorylated FFAT motif), MIGA2 (via phosphorylated FFAT motif), RMDN3 (via phosphorylated FFAT motif), OSBPL1A (via FFAT motif), KCNB1 (via phosphorylated FFAT motif) and KCNB2 (via phosphorylated FFAT motif). Interacts (via MSP domain) with WDR44 (via FFAT motif); the interactions connect the endoplasmic reticulum (ER) with the endosomal tubule.

Its subcellular location is the endoplasmic reticulum membrane. Functionally, endoplasmic reticulum (ER)-anchored protein that mediates the formation of contact sites between the ER and endosomes via interaction with FFAT motif-containing proteins such as STARD3 or WDR44. Interacts with STARD3 in a FFAT motif phosphorylation dependent manner. Via interaction with WDR44 participates in neosynthesized protein export. Participates in the endoplasmic reticulum unfolded protein response (UPR) by inducing ERN1/IRE1 activity. Involved in cellular calcium homeostasis regulation. This chain is Vesicle-associated membrane protein-associated protein B, found in Mus musculus (Mouse).